A 715-amino-acid polypeptide reads, in one-letter code: MKGLEKIIPLDGRDIKVVLQKFAPQAAGSILISSGETAVLVTANRAAAREGIDFLPLVVDYEERLYAAGRIPGGFLRREGRPPEKAILIGRLIDRPLRPLFPQWLRDDLQVVATTVSLDENAPPDVLAVTGASIAVLLAQIPFNGPMAAVRVGLVGDEFVINPTYKEIERGGLDLVVAGSPDGVVMVEAGANELPEADMIEAIDFAYEVIRDLIQAQRDLLKELGIDIVRAEPPAIDPTLENFIYDRAAEPVKAILKRFEKDKNVRDAALDEVQGAIAQEIAALPEDDPVAVAAAENPKALPTLFKAVTKKLMRQQIIEEGVRVDGRRLDEVRPIWCEVGVLPERVHGSALFNRGLTQVMSVTTLGSPADAQALDDLHPEDSKRYLHHYNFPPYSVGEVKPLRSPGRREIGHGALAERALEPVLPPKEEFPYVIRVVSEVLSSDGSTSMGSVCGSTLSLMDAGVPIRKPVSGAAMGLIKEGNEVRILTDIQGIEDFLGDMDFKVAGTDSGITALQMDMKITGLPVAVIQQAIEQARPARLHILEKMLAVLDKPRPQLPPSAPRLLTLQIPPDMIGLVIGPGGKTVRGISEQYNVKVDISEEGLVTITAPNETNAKQARAAIEGLTRKLNAGDVYLGRVTRIIPIGAFVELLPGKEGMIHISQLAEYRVGKVEDEVKIGDEIVVKIREVDSKGRINLTRLGIHPDEAEAARSNSVV.

2 residues coordinate Mg(2+): D495 and D501. A KH domain is found at P562–I621. The S1 motif domain occupies G631–L699.

This sequence belongs to the polyribonucleotide nucleotidyltransferase family. Mg(2+) serves as cofactor.

It is found in the cytoplasm. It catalyses the reaction RNA(n+1) + phosphate = RNA(n) + a ribonucleoside 5'-diphosphate. In terms of biological role, involved in mRNA degradation. Catalyzes the phosphorolysis of single-stranded polyribonucleotides processively in the 3'- to 5'-direction. The sequence is that of Polyribonucleotide nucleotidyltransferase from Thermosynechococcus vestitus (strain NIES-2133 / IAM M-273 / BP-1).